The sequence spans 1384 residues: Hepatocyte growth factor receptor (1384 aa).

The signal sequence occupies residues 1–24; that stretch reads MKAPAVLAPGILVLLFTFVQKSNG. Over 25–933 the chain is Extracellular; the sequence is ECKEALVKSR…VIVQPDQNFT (909 aa). Residues 27 to 516 form the Sema domain; sequence KEALVKSRMN…TGKKITKIPL (490 aa). A glycan (N-linked (GlcNAc...) asparagine) is linked at asparagine 45. 4 cysteine pairs are disulfide-bonded: cysteine 95/cysteine 101, cysteine 98/cysteine 160, cysteine 133/cysteine 141, and cysteine 173/cysteine 176. Asparagine 106 carries an N-linked (GlcNAc...) asparagine glycan. Asparagine 149 carries N-linked (GlcNAc...) asparagine glycosylation. 2 N-linked (GlcNAc...) asparagine glycosylation sites follow: asparagine 203 and asparagine 359. 2 disulfides stabilise this stretch: cysteine 299-cysteine 364 and cysteine 386-cysteine 398. 2 N-linked (GlcNAc...) asparagine glycosylation sites follow: asparagine 400 and asparagine 406. 4 disulfides stabilise this stretch: cysteine 521–cysteine 539, cysteine 527–cysteine 562, cysteine 530–cysteine 546, and cysteine 542–cysteine 552. IPT/TIG domains follow at residues 564 to 656, 658 to 740, and 743 to 837; these read PTIY…FSYV, PIIT…FIYR, and PIVY…LIYV. A glycan (O-linked (Man) threonine) is linked at threonine 583. N-linked (GlcNAc...) asparagine glycans are attached at residues asparagine 608 and asparagine 636. O-linked (Man) threonine glycans are attached at residues threonine 677 and threonine 762. 3 N-linked (GlcNAc...) asparagine glycosylation sites follow: asparagine 786, asparagine 880, and asparagine 931. The helical transmembrane segment at 934–956 threads the bilayer; sequence GLIVGVVSISIILLLLLGLFLWL. Residues 957-1384 lie on the Cytoplasmic side of the membrane; that stretch reads KKRKQIKDLG…NVSGEDDDDT (428 aa). Residue serine 967 is modified to Phosphoserine. A Phosphothreonine modification is found at threonine 978. Residues serine 991, serine 998, and serine 1001 each carry the phosphoserine modification. A Phosphotyrosine modification is found at tyrosine 1004. Residues 1079–1346 form the Protein kinase domain; it reads VHFNEVIGRG…RISVIFSTFI (268 aa). ATP contacts are provided by residues 1085–1093 and lysine 1111; that span reads IGRGHFGCV. The active-site Proton acceptor is aspartate 1205. Residues 1213-1382 form an interaction with RANBP9 region; sequence LDEKFTVKVA…QDNVSGEDDD (170 aa). Residue tyrosine 1231 is modified to Phosphotyrosine. Phosphotyrosine; by autocatalysis occurs at positions 1235 and 1236. Residue threonine 1290 is modified to Phosphothreonine. Positions 1321-1360 are interaction with MUC20; it reads WHPKAELRPSFSELVSRISVIFSTFIGEHYVHVNATYVNV. Residues tyrosine 1350 and tyrosine 1357 each carry the phosphotyrosine; by autocatalysis modification. Tyrosine 1366 bears the Phosphotyrosine mark.

This sequence belongs to the protein kinase superfamily. Tyr protein kinase family. Heterodimer made of an alpha chain (50 kDa) and a beta chain (145 kDa) which are disulfide linked. Binds PLXNB1. Interacts when phosphorylated with downstream effectors including STAT3, PIK3R1, SRC, PCLG1, GRB2 and GAB1. Interacts with SPSB1, SPSB2 and SPSB4. Interacts with INPP5D/SHIP1. When phosphorylated at Tyr-1357, interacts with INPPL1/SHIP2. Interacts with RANBP9 and RANBP10, as well as SPSB1, SPSB2, SPSB3 and SPSB4. SPSB1 binding occurs in the presence and in the absence of HGF, however HGF treatment has a positive effect on this interaction. Interacts with MUC20; prevents interaction with GRB2 and suppresses hepatocyte growth factor-induced cell proliferation. Interacts with GRB10. Interacts with PTPN1 and PTPN2. Interacts with HSP90AA1 and HSP90AB1; the interaction suppresses MET kinase activity. Interacts with tensin TNS3. Interacts (when phosphorylated) with tensin TNS4 (via SH2 domain); the interaction increases MET protein stability by inhibiting MET endocytosis and subsequent lysosomal degradation. Autophosphorylated in response to ligand binding on Tyr-1235 and Tyr-1236 in the kinase domain leading to further phosphorylation of Tyr-1350 and Tyr-1357 in the C-terminal multifunctional docking site. Dephosphorylated by PTPRJ at Tyr-1350 and Tyr-1366. Dephosphorylated by PTPN1 and PTPN2. Post-translationally, ubiquitinated. Ubiquitination by CBL regulates the receptor stability and activity through proteasomal degradation. In terms of processing, O-mannosylation of IPT/TIG domains by TMEM260 is required for protein maturation. O-mannosylated residues are composed of single mannose glycans that are not elongated or modified. Expressed in many tissues, including liver, lung, heart, spleen and mammary gland.

The protein resides in the membrane. The enzyme catalyses L-tyrosyl-[protein] + ATP = O-phospho-L-tyrosyl-[protein] + ADP + H(+). Its activity is regulated as follows. In its inactive state, the C-terminal tail interacts with the catalytic domain and inhibits the kinase activity. Upon ligand binding, the C-terminal tail is displaced and becomes phosphorylated, thus increasing the kinase activity. Its function is as follows. Receptor tyrosine kinase that transduces signals from the extracellular matrix into the cytoplasm by binding to hepatocyte growth factor/HGF ligand. Regulates many physiological processes including proliferation, scattering, morphogenesis and survival. Ligand binding at the cell surface induces autophosphorylation of MET on its intracellular domain that provides docking sites for downstream signaling molecules. Following activation by ligand, interacts with the PI3-kinase subunit PIK3R1, PLCG1, SRC, GRB2, STAT3 or the adapter GAB1. Recruitment of these downstream effectors by MET leads to the activation of several signaling cascades including the RAS-ERK, PI3 kinase-AKT, or PLCgamma-PKC. The RAS-ERK activation is associated with the morphogenetic effects while PI3K/AKT coordinates prosurvival effects. During embryonic development, MET signaling plays a role in gastrulation, development and migration of muscles and neuronal precursors, angiogenesis and kidney formation. In adults, participates in wound healing as well as organ regeneration and tissue remodeling. Also promotes differentiation and proliferation of hematopoietic cells. The protein is Hepatocyte growth factor receptor (MET) of Bos taurus (Bovine).